The primary structure comprises 302 residues: MRLIFMGSPDFSVPVLEALHAHHEVVCVYCQPPRPAGRGKKDRPTPVQTRAEELGLPVRYPTSLRTPEAQAEFAALGAEAAVVVAYGLILPQPILDAPERGCLNIHASLLPRWRGAAPIHRAILAGDEETGICIMQMEAGLDTGPVLMCEKTHIGPEETVQDLHDRLSDMGARLILGALGALDDLVPRPQPDAGVTYAEKIAKAEAGIDWTRPAAEIDRQIRGLSPFPGAWTLLNGERVKLLRCRLAEGQGAPGAVLPGLTIACGTGAVEITLAQREGKRPMEPEEFLRGFPLPEGSRAHTA.

108–111 is a (6S)-5,6,7,8-tetrahydrofolate binding site; sequence SLLP. Residues 276–288 show a composition bias toward basic and acidic residues; that stretch reads REGKRPMEPEEFL. The tract at residues 276 to 302 is disordered; that stretch reads REGKRPMEPEEFLRGFPLPEGSRAHTA.

This sequence belongs to the Fmt family.

The enzyme catalyses L-methionyl-tRNA(fMet) + (6R)-10-formyltetrahydrofolate = N-formyl-L-methionyl-tRNA(fMet) + (6S)-5,6,7,8-tetrahydrofolate + H(+). Attaches a formyl group to the free amino group of methionyl-tRNA(fMet). The formyl group appears to play a dual role in the initiator identity of N-formylmethionyl-tRNA by promoting its recognition by IF2 and preventing the misappropriation of this tRNA by the elongation apparatus. In Cereibacter sphaeroides (strain ATCC 17029 / ATH 2.4.9) (Rhodobacter sphaeroides), this protein is Methionyl-tRNA formyltransferase.